The chain runs to 103 residues: uncharacterized protein (103 aa).

The span at 1 to 10 (MVVKKSKPKN) shows a compositional bias: basic residues. 2 disordered regions span residues 1–38 (MVVK…KGKK) and 77–103 (AVFS…NEKK).

This is an uncharacterized protein from Schizosaccharomyces pombe (strain 972 / ATCC 24843) (Fission yeast).